The primary structure comprises 281 residues: Protein DOG1-like 1 (281 aa).

Positions Glu9–Arg265 constitute a DOG1 domain. Residues Arg262 to Glu281 form a disordered region.

This chain is Protein DOG1-like 1, found in Arabidopsis thaliana (Mouse-ear cress).